The chain runs to 365 residues: DNA replication and repair protein RecF (365 aa).

An ATP-binding site is contributed by 30-37 (GLNAQGKT).

It belongs to the RecF family.

The protein localises to the cytoplasm. Functionally, the RecF protein is involved in DNA metabolism; it is required for DNA replication and normal SOS inducibility. RecF binds preferentially to single-stranded, linear DNA. It also seems to bind ATP. In Chlamydia trachomatis serovar L2b (strain UCH-1/proctitis), this protein is DNA replication and repair protein RecF.